We begin with the raw amino-acid sequence, 343 residues long: tRNA N6-adenosine threonylcarbamoyltransferase (343 aa).

Fe cation is bound by residues His108 and His112. Substrate-binding positions include 129-133 (LISGG), Asp161, Glu178, and Ser258. Asp286 contacts Fe cation.

Belongs to the KAE1 / TsaD family. The cofactor is Fe(2+).

The protein resides in the cytoplasm. It catalyses the reaction L-threonylcarbamoyladenylate + adenosine(37) in tRNA = N(6)-L-threonylcarbamoyladenosine(37) in tRNA + AMP + H(+). Its function is as follows. Required for the formation of a threonylcarbamoyl group on adenosine at position 37 (t(6)A37) in tRNAs that read codons beginning with adenine. Is probably involved in the transfer of the threonylcarbamoyl moiety of threonylcarbamoyl-AMP (TC-AMP) to the N6 group of A37. The chain is tRNA N6-adenosine threonylcarbamoyltransferase from Pyrobaculum aerophilum (strain ATCC 51768 / DSM 7523 / JCM 9630 / CIP 104966 / NBRC 100827 / IM2).